We begin with the raw amino-acid sequence, 505 residues long: DNA primase large subunit (505 aa).

Residues 253-270 (LSHSYTGQDYSTQKNTGK) form an interdomain linker region. The interacts with PRIM1 stretch occupies residues 266–503 (KNTGKISLDQ…LEMDLEGLEE (238 aa)). [4Fe-4S] cluster-binding residues include cysteine 287, cysteine 367, cysteine 384, and cysteine 424. Positions 300–442 (HLRHGGRMQY…NVDDCGFSLN (143 aa)) are RNA:DNA duplex binding. The disordered stretch occupies residues 463 to 486 (KEISQPETPQHKPSTQKTRDAASA). Polar residues predominate over residues 467 to 478 (QPETPQHKPSTQ). Residue threonine 470 is modified to Phosphothreonine.

The protein belongs to the eukaryotic-type primase large subunit family. In terms of assembly, heterodimer of a catalytic subunit PRIM1 and a regulatory subunit PRIM2, also known as the DNA primase complex. Interacts via (C-terminus) with PRIM1. Component of the alpha DNA polymerase complex (also known as the alpha DNA polymerase-primase complex) consisting of four subunits: the catalytic subunit POLA1, the regulatory subunit POLA2, and the primase complex subunits PRIM1 and PRIM2 respectively. Within the complex, POLA1 directly interacts with PRIM2. The cofactor is [4Fe-4S] cluster.

In terms of biological role, regulatory subunit of the DNA primase complex and component of the DNA polymerase alpha complex (also known as the alpha DNA polymerase-primase complex) which play an essential role in the initiation of DNA synthesis. During the S phase of the cell cycle, the DNA polymerase alpha complex (composed of a catalytic subunit POLA1, an accessory subunit POLA2 and two primase subunits, the catalytic subunit PRIM1 and the regulatory subunit PRIM2) is recruited to DNA at the replicative forks via direct interactions with MCM10 and WDHD1. The primase subunit of the polymerase alpha complex initiates DNA synthesis by oligomerising short RNA primers on both leading and lagging strands. These primers are initially extended by the polymerase alpha catalytic subunit and subsequently transferred to polymerase delta and polymerase epsilon for processive synthesis on the lagging and leading strand, respectively. In the primase complex, both subunits are necessary for the initial di-nucleotide formation, but the extension of the primer depends only on the catalytic subunit. Binds RNA:DNA duplex and coordinates the catalytic activities of PRIM1 and POLA2 during primase-to-polymerase switch. The chain is DNA primase large subunit (Prim2) from Mus musculus (Mouse).